The chain runs to 364 residues: Anthranilate phosphoribosyltransferase (364 aa).

Positions 1–10 (MTSGPSQPFP) are enriched in polar residues. Residues 1 to 22 (MTSGPSQPFPSASGPDDGPSWP) are disordered. Residues glycine 101, 104-105 (GD), threonine 109, 111-114 (NLST), 129-137 (KHGNRAASS), and glycine 141 each bind 5-phospho-alpha-D-ribose 1-diphosphate. Anthranilate is bound at residue glycine 101. Serine 113 contributes to the Mg(2+) binding site. Asparagine 132 contacts anthranilate. Anthranilate is bound at residue arginine 187. Mg(2+) contacts are provided by aspartate 245 and glutamate 246.

This sequence belongs to the anthranilate phosphoribosyltransferase family. In terms of assembly, homodimer. The cofactor is Mg(2+).

It carries out the reaction N-(5-phospho-beta-D-ribosyl)anthranilate + diphosphate = 5-phospho-alpha-D-ribose 1-diphosphate + anthranilate. Its pathway is amino-acid biosynthesis; L-tryptophan biosynthesis; L-tryptophan from chorismate: step 2/5. Catalyzes the transfer of the phosphoribosyl group of 5-phosphorylribose-1-pyrophosphate (PRPP) to anthranilate to yield N-(5'-phosphoribosyl)-anthranilate (PRA). The protein is Anthranilate phosphoribosyltransferase of Mycolicibacterium smegmatis (strain ATCC 700084 / mc(2)155) (Mycobacterium smegmatis).